The following is a 307-amino-acid chain: Cyclin-dependent kinase 5 activator 1 (307 aa).

A lipid anchor (N-myristoyl glycine) is attached at glycine 2. A Phosphoserine; by CDK5 modification is found at serine 8. Positions 97-133 are disordered; it reads TFAQPPPAQPPAPPASQLSGSQTGVSSSVKKAPHPAI. The segment covering 100–110 has biased composition (pro residues); that stretch reads QPPPAQPPAPP. Positions 112 to 125 are enriched in polar residues; sequence SQLSGSQTGVSSSV. The residue at position 138 (threonine 138) is a Phosphothreonine; by CDK5.

This sequence belongs to the cyclin-dependent kinase 5 activator family. As to quaternary structure, heterodimer composed of a catalytic subunit CDK5 and a regulatory subunit CDK5R1 (p25) and macromolecular complex composed of at least CDK5, CDK5R1 (p35) and CDK5RAP1 or CDK5RAP2 or CDK5RAP3. Only the heterodimer shows kinase activity. Interacts with EPHA4 and NGEF; may mediate the activation of NGEF by EPHA4. Interacts with RASGRF2. The complex p35/CDK5 interacts with CLOCK. In terms of processing, the p35 form is proteolytically cleaved by calpain, giving rise to the p25 form. P35 has a 5 to 10 fold shorter half-life compared to p25. The conversion results in deregulation of the CDK5 kinase: p25/CDK5 kinase displays an increased and altered tau phosphorylation in comparison to the p35/CDK5 kinase in vivo. Post-translationally, myristoylated. A proper myristoylation signal is essential for the proper distribution of p35. Phosphorylation at Ser-8 and Thr-138 by CDK5 prevents calpain-mediated proteolysis. In terms of processing, ubiquitinated, leading to its degradation: degradation of p35 by proteasome results in down-regulation of CDK5 activity. During this process, CDK5 phosphorylates p35 and induces its ubiquitination and subsequent degradation. Ubiquitinated by the CRL2(FEM1B) complex, which recognizes the -Gly-Leu-Asp-Arg C-degron at the C-terminus, leading to its degradation. Brain and neuron specific.

The protein localises to the cell membrane. Its subcellular location is the cell projection. It localises to the neuron projection. It is found in the nucleus. The protein resides in the cytoplasm. The protein localises to the perinuclear region. Its subcellular location is the perikaryon. Its function is as follows. p35 is a neuron specific activator of CDK5. The complex p35/CDK5 is required for neurite outgrowth and cortical lamination. Involved in dendritic spine morphogenesis by mediating the EFNA1-EPHA4 signaling. Activator of TPKII. The complex p35/CDK5 participates in the regulation of the circadian clock by modulating the function of CLOCK protein: phosphorylates CLOCK at 'Thr-451' and 'Thr-461' and regulates the transcriptional activity of the CLOCK-BMAL1 heterodimer in association with altered stability and subcellular distribution. The sequence is that of Cyclin-dependent kinase 5 activator 1 (Cdk5r1) from Rattus norvegicus (Rat).